A 367-amino-acid chain; its full sequence is Heat-inducible transcription repressor HrcA (367 aa).

It belongs to the HrcA family.

Its function is as follows. Negative regulator of class I heat shock genes (grpE-dnaK-dnaJ and groELS operons). Prevents heat-shock induction of these operons. The polypeptide is Heat-inducible transcription repressor HrcA (Acaryochloris marina (strain MBIC 11017)).